A 194-amino-acid polypeptide reads, in one-letter code: 7-methyl-GTP pyrophosphatase (194 aa).

Aspartate 69 acts as the Proton acceptor in catalysis.

This sequence belongs to the Maf family. YceF subfamily. A divalent metal cation is required as a cofactor.

The protein localises to the cytoplasm. It catalyses the reaction N(7)-methyl-GTP + H2O = N(7)-methyl-GMP + diphosphate + H(+). In terms of biological role, nucleoside triphosphate pyrophosphatase that hydrolyzes 7-methyl-GTP (m(7)GTP). May have a dual role in cell division arrest and in preventing the incorporation of modified nucleotides into cellular nucleic acids. The protein is 7-methyl-GTP pyrophosphatase (yceF1) of Salmonella choleraesuis (strain SC-B67).